The primary structure comprises 138 residues: Thyrotropin subunit beta (138 aa).

The signal sequence occupies residues 1 to 20 (MTATFLMSLLFGLAFGQTMS). 6 disulfide bridges follow: Cys-22-Cys-72, Cys-36-Cys-87, Cys-39-Cys-125, Cys-47-Cys-103, Cys-51-Cys-105, and Cys-108-Cys-115. N-linked (GlcNAc...) asparagine glycosylation is present at Asn-43. The propeptide occupies 133-138 (LVGFPV).

This sequence belongs to the glycoprotein hormones subunit beta family. In terms of assembly, heterodimer of a common alpha chain and a unique beta chain which confers biological specificity to thyrotropin, lutropin, follitropin and gonadotropin.

Its subcellular location is the secreted. Indispensable for the control of thyroid structure and metabolism. The sequence is that of Thyrotropin subunit beta (TSHB) from Monodelphis domestica (Gray short-tailed opossum).